Here is a 592-residue protein sequence, read N- to C-terminus: Cryptochrome-2 (592 aa).

The 130-residue stretch at 21–150 (ASSVHWFRKG…EVVTENSHTL (130 aa)) folds into the Photolyase/cryptochrome alpha/beta domain. A Glycyl lysine isopeptide (Lys-Gly) (interchain with G-Cter in ubiquitin) cross-link involves residue lysine 29. Residue serine 89 is modified to Phosphoserine. Glycyl lysine isopeptide (Lys-Gly) (interchain with G-Cter in ubiquitin) cross-links involve residues lysine 125 and lysine 241. Serine 265 carries the post-translational modification Phosphoserine; by MAPK. An FAD-binding site is contributed by serine 270. Serine 298 carries the post-translational modification Phosphoserine. Glutamine 307 is a binding site for FAD. Residue lysine 347 forms a Glycyl lysine isopeptide (Lys-Gly) (interchain with G-Cter in ubiquitin) linkage. FAD is bound by residues histidine 373 and 405–407 (DAD). Residues 389 to 488 (WVSWESGVRV…IIGVDYPRPI (100 aa)) form a required for inhibition of CLOCK-BMAL1-mediated transcription region. Glycyl lysine isopeptide (Lys-Gly) (interchain with G-Cter in ubiquitin) cross-links involve residues lysine 474 and lysine 503. The segment at 532-592 (VAEPGSSQAG…PTQEPASKDS (61 aa)) is disordered. Positions 536 to 547 (GSSQAGSISNTG) are enriched in polar residues. The residue at position 553 (serine 553) is a Phosphoserine; by GSK3-beta. Serine 557 carries the post-translational modification Phosphoserine; by DYRK1A and MAPK. Residues 582–592 (MPTQEPASKDS) are compositionally biased toward polar residues.

It belongs to the DNA photolyase class-1 family. In terms of assembly, component of the circadian core oscillator, which includes the CRY proteins, CLOCK or NPAS2, BMAL1 or BMAL2, CSNK1D and/or CSNK1E, TIMELESS, and the PER proteins. Interacts with TIMELESS. Interacts directly with PER1, PER2 and PER3; interaction with PER2 inhibits its ubiquitination and vice versa. Interacts with CLOCK-BMAL1. Interacts with BMAL1. Interacts with CLOCK. Interacts with NFIL3. Interacts with FBXL3 and FBXL21. FBXL3, PER2 and the cofactor FAD compete for overlapping binding sites. FBXL3 cannot bind CRY2 that interacts already with PER2 or that contains bound FAD. Interacts with PPP5C (via TPR repeats); the interaction down-regulates the PPP5C phosphatase activity on CSNK1E. Interacts with nuclear receptors AR and NR3C1/GR; the interaction is ligand dependent. Interacts with PRKDC. Interacts with CIART. Interacts with DDB1, USP7 and TARDBP. Interacts with HNF4A. Interacts with PPARA. Interacts with PPARG in a ligand-dependent manner. Interacts with PPARD (via domain NR LBD) in a ligand-dependent manner. Interacts with NR1I2 (via domain NR LBD) in a ligand-dependent manner. Interacts with NR1I3 and VDR in a ligand-dependent manner. FAD is required as a cofactor. Requires (6R)-5,10-methylene-5,6,7,8-tetrahydrofolate as cofactor. In terms of processing, phosphorylation on Ser-265 by MAPK is important for the inhibition of CLOCK-BMAL1-mediated transcriptional activity. Phosphorylation by CSKNE requires interaction with PER1 or PER2. Phosphorylated in a circadian manner at Ser-553 and Ser-557 in the suprachiasmatic nucleus (SCN) and liver. Phosphorylation at Ser-557 by DYRK1A promotes subsequent phosphorylation at Ser-553 by GSK3-beta: the two-step phosphorylation at the neighboring Ser residues leads to its proteasomal degradation. Post-translationally, ubiquitinated by the SCF(FBXL3) and SCF(FBXL21) complexes, regulating the balance between degradation and stabilization. The SCF(FBXL3) complex is mainly nuclear and mediates ubiquitination and subsequent degradation of CRY2. In contrast, cytoplasmic SCF(FBXL21) complex-mediated ubiquitination leads to stabilize CRY2 and counteract the activity of the SCF(FBXL3) complex. The SCF(FBXL3) and SCF(FBXL21) complexes probably mediate ubiquitination at different Lys residues. The SCF(FBXL3) complex recognizes and binds CRY2 phosphorylated at Ser-553 and Ser-557. Ubiquitination may be inhibited by PER2. Deubiquitinated by USP7. In terms of tissue distribution, expression in the retina is restricted to the photoreceptor layer (at protein level). Expressed in all tissues examined including heart, brain, spleen, lung, liver, skeletal muscle, kidney and testis. Weak expression in spleen.

Its subcellular location is the cytoplasm. It localises to the nucleus. KL001 (N-[3-(9H-carbazol-9-yl)-2-hydroxypropyl]-N-(2-furanylmethyl)-methanesulfonamide) binds to CRY1 and stabilizes it by inhibiting FBXL3- and ubiquitin-dependent degradation of CRY1 resulting in lengthening of the circadian periods. KL001-mediated CRY1 stabilization can inhibit glucagon-induced gluconeogenesis in primary hepatocytes. Transcriptional repressor which forms a core component of the circadian clock. The circadian clock, an internal time-keeping system, regulates various physiological processes through the generation of approximately 24 hour circadian rhythms in gene expression, which are translated into rhythms in metabolism and behavior. It is derived from the Latin roots 'circa' (about) and 'diem' (day) and acts as an important regulator of a wide array of physiological functions including metabolism, sleep, body temperature, blood pressure, endocrine, immune, cardiovascular, and renal function. Consists of two major components: the central clock, residing in the suprachiasmatic nucleus (SCN) of the brain, and the peripheral clocks that are present in nearly every tissue and organ system. Both the central and peripheral clocks can be reset by environmental cues, also known as Zeitgebers (German for 'timegivers'). The predominant Zeitgeber for the central clock is light, which is sensed by retina and signals directly to the SCN. The central clock entrains the peripheral clocks through neuronal and hormonal signals, body temperature and feeding-related cues, aligning all clocks with the external light/dark cycle. Circadian rhythms allow an organism to achieve temporal homeostasis with its environment at the molecular level by regulating gene expression to create a peak of protein expression once every 24 hours to control when a particular physiological process is most active with respect to the solar day. Transcription and translation of core clock components (CLOCK, NPAS2, BMAL1, BMAL2, PER1, PER2, PER3, CRY1 and CRY2) plays a critical role in rhythm generation, whereas delays imposed by post-translational modifications (PTMs) are important for determining the period (tau) of the rhythms (tau refers to the period of a rhythm and is the length, in time, of one complete cycle). A diurnal rhythm is synchronized with the day/night cycle, while the ultradian and infradian rhythms have a period shorter and longer than 24 hours, respectively. Disruptions in the circadian rhythms contribute to the pathology of cardiovascular diseases, cancer, metabolic syndromes and aging. A transcription/translation feedback loop (TTFL) forms the core of the molecular circadian clock mechanism. Transcription factors, CLOCK or NPAS2 and BMAL1 or BMAL2, form the positive limb of the feedback loop, act in the form of a heterodimer and activate the transcription of core clock genes and clock-controlled genes (involved in key metabolic processes), harboring E-box elements (5'-CACGTG-3') within their promoters. The core clock genes: PER1/2/3 and CRY1/2 which are transcriptional repressors form the negative limb of the feedback loop and interact with the CLOCK|NPAS2-BMAL1|BMAL2 heterodimer inhibiting its activity and thereby negatively regulating their own expression. This heterodimer also activates nuclear receptors NR1D1/2 and RORA/B/G, which form a second feedback loop and which activate and repress BMAL1 transcription, respectively. CRY1 and CRY2 have redundant functions but also differential and selective contributions at least in defining the pace of the SCN circadian clock and its circadian transcriptional outputs. Less potent transcriptional repressor in cerebellum and liver than CRY1, though less effective in lengthening the period of the SCN oscillator. Seems to play a critical role in tuning SCN circadian period by opposing the action of CRY1. With CRY1, dispensable for circadian rhythm generation but necessary for the development of intercellular networks for rhythm synchrony. May mediate circadian regulation of cAMP signaling and gluconeogenesis by blocking glucagon-mediated increases in intracellular cAMP concentrations and in CREB1 phosphorylation. Besides its role in the maintenance of the circadian clock, is also involved in the regulation of other processes. Plays a key role in glucose and lipid metabolism modulation, in part, through the transcriptional regulation of genes involved in these pathways, such as LEP or ACSL4. Represses glucocorticoid receptor NR3C1/GR-induced transcriptional activity by binding to glucocorticoid response elements (GREs). Represses the CLOCK-BMAL1 induced transcription of BHLHE40/DEC1 and NAMPT. Represses PPARD and its target genes in the skeletal muscle and limits exercise capacity. Represses the transcriptional activity of NR1I2. The protein is Cryptochrome-2 (Cry2) of Mus musculus (Mouse).